An 84-amino-acid chain; its full sequence is Sporulation-specific transcription factor SpoVIF (84 aa).

It is found in the cytoplasm. Transcription factor involved in spore coat assembly and spore resistance. Required for gene regulation during the latter stages of sporulation. Regulates the transcription of at least cgeA, cotG and cotS. May directly or indirectly control the function of the GerE protein. The sequence is that of Sporulation-specific transcription factor SpoVIF from Bacillus subtilis (strain 168).